The sequence spans 252 residues: Aspartate/glutamate leucyltransferase (252 aa).

The protein belongs to the R-transferase family. Bpt subfamily.

It is found in the cytoplasm. The catalysed reaction is N-terminal L-glutamyl-[protein] + L-leucyl-tRNA(Leu) = N-terminal L-leucyl-L-glutamyl-[protein] + tRNA(Leu) + H(+). The enzyme catalyses N-terminal L-aspartyl-[protein] + L-leucyl-tRNA(Leu) = N-terminal L-leucyl-L-aspartyl-[protein] + tRNA(Leu) + H(+). Its function is as follows. Functions in the N-end rule pathway of protein degradation where it conjugates Leu from its aminoacyl-tRNA to the N-termini of proteins containing an N-terminal aspartate or glutamate. In Afipia carboxidovorans (strain ATCC 49405 / DSM 1227 / KCTC 32145 / OM5) (Oligotropha carboxidovorans), this protein is Aspartate/glutamate leucyltransferase.